Consider the following 232-residue polypeptide: 2,3,4,5-tetrahydropyridine-2,6-dicarboxylate N-acetyltransferase (232 aa).

It belongs to the transferase hexapeptide repeat family. DapH subfamily.

The enzyme catalyses (S)-2,3,4,5-tetrahydrodipicolinate + acetyl-CoA + H2O = L-2-acetamido-6-oxoheptanedioate + CoA. It functions in the pathway amino-acid biosynthesis; L-lysine biosynthesis via DAP pathway; LL-2,6-diaminopimelate from (S)-tetrahydrodipicolinate (acetylase route): step 1/3. In terms of biological role, catalyzes the transfer of an acetyl group from acetyl-CoA to tetrahydrodipicolinate. This chain is 2,3,4,5-tetrahydropyridine-2,6-dicarboxylate N-acetyltransferase, found in Kosmotoga olearia (strain ATCC BAA-1733 / DSM 21960 / TBF 19.5.1).